The chain runs to 615 residues: 3-(3-hydroxy-phenyl)propionate/3-hydroxycinnamic acid hydroxylase 1 (615 aa).

Positions 1–20 (MRPAFEPAAGLGRAHPHETT) are disordered. FAD is bound by residues 27-56 (DVAI…VVEK) and 294-304 (FRVKRILLAGD).

Belongs to the PheA/TfdB FAD monooxygenase family. FAD is required as a cofactor.

The enzyme catalyses 3-(3-hydroxyphenyl)propanoate + NADH + O2 + H(+) = 3-(2,3-dihydroxyphenyl)propanoate + NAD(+) + H2O. The catalysed reaction is (2E)-3-(3-hydroxyphenyl)prop-2-enoate + NADH + O2 + H(+) = (2E)-3-(2,3-dihydroxyphenyl)prop-2-enoate + NAD(+) + H2O. It functions in the pathway aromatic compound metabolism; 3-phenylpropanoate degradation. In terms of biological role, catalyzes the insertion of one atom of molecular oxygen into position 2 of the phenyl ring of 3-(3-hydroxyphenyl)propionate (3-HPP) and hydroxycinnamic acid (3HCI). In Burkholderia vietnamiensis (strain G4 / LMG 22486) (Burkholderia cepacia (strain R1808)), this protein is 3-(3-hydroxy-phenyl)propionate/3-hydroxycinnamic acid hydroxylase 1.